A 178-amino-acid polypeptide reads, in one-letter code: Translation machinery-associated protein 16 (178 aa).

It belongs to the TMA16 family.

Its subcellular location is the nucleus. This is Translation machinery-associated protein 16 (TMA16) from Saccharomyces cerevisiae (strain ATCC 204508 / S288c) (Baker's yeast).